The chain runs to 340 residues: Glycerol-3-phosphate dehydrogenase [NAD(P)+] (340 aa).

NADPH contacts are provided by Ser-15, Tyr-16, His-36, and Lys-110. The sn-glycerol 3-phosphate site is built by Lys-110, Gly-139, and Thr-141. Ala-143 is a binding site for NADPH. Sn-glycerol 3-phosphate-binding residues include Lys-196, Asp-249, Ser-259, Arg-260, and Asn-261. Lys-196 functions as the Proton acceptor in the catalytic mechanism. Residue Arg-260 participates in NADPH binding. NADPH-binding residues include Val-284 and Glu-286.

It belongs to the NAD-dependent glycerol-3-phosphate dehydrogenase family.

It is found in the cytoplasm. It carries out the reaction sn-glycerol 3-phosphate + NAD(+) = dihydroxyacetone phosphate + NADH + H(+). The catalysed reaction is sn-glycerol 3-phosphate + NADP(+) = dihydroxyacetone phosphate + NADPH + H(+). It functions in the pathway membrane lipid metabolism; glycerophospholipid metabolism. Functionally, catalyzes the reduction of the glycolytic intermediate dihydroxyacetone phosphate (DHAP) to sn-glycerol 3-phosphate (G3P), the key precursor for phospholipid synthesis. This Serratia marcescens protein is Glycerol-3-phosphate dehydrogenase [NAD(P)+].